Consider the following 544-residue polypeptide: D-2-hydroxyglutarate dehydrogenase, mitochondrial (544 aa).

Residues 1–10 (MMMPRLVPRW) constitute a mitochondrion transit peptide. The region spanning 119–298 (VRGSSKVLLR…TAVSILCPPK (180 aa)) is the FAD-binding PCMH-type domain. K124 carries the post-translational modification N6-succinyllysine. R409, T413, and K424 together coordinate (R)-2-hydroxyglutarate. Residue R409 participates in (R)-lactate binding. (R)-malate contacts are provided by R409, T413, and K424. The Zn(2+) site is built by H457 and H464. N466 provides a ligand contact to (R)-2-hydroxyglutarate. Position 498 (E498) interacts with Zn(2+). Position 499 (H499) interacts with (R)-2-hydroxyglutarate. H499 is a (R)-lactate binding site. A (R)-malate-binding site is contributed by H499.

Belongs to the FAD-binding oxidoreductase/transferase type 4 family. FAD serves as cofactor.

The protein resides in the mitochondrion. The enzyme catalyses (R)-2-hydroxyglutarate + A = 2-oxoglutarate + AH2. It carries out the reaction (R)-malate + A = oxaloacetate + AH2. Activated by zinc and cobalt ions. Catalyzes the oxidation of D-2-hydroxyglutarate (D-2-HG) to alpha-ketoglutarate. Also catalyzes the oxidation of other D-2-hydroxyacids, such as D-malate (D-MAL) and D-lactate (D-LAC). Exhibits high activities towards D-2-HG and D-MAL but a very weak activity towards D-LAC. This is D-2-hydroxyglutarate dehydrogenase, mitochondrial (D2HGDH) from Bos taurus (Bovine).